The following is a 422-amino-acid chain: Serine--tRNA ligase (422 aa).

231–233 serves as a coordination point for L-serine; it reads TGE. 262–264 serves as a coordination point for ATP; the sequence is RQE. E285 contributes to the L-serine binding site. 349 to 352 serves as a coordination point for ATP; the sequence is EISS. Residue S384 participates in L-serine binding.

It belongs to the class-II aminoacyl-tRNA synthetase family. Type-1 seryl-tRNA synthetase subfamily. In terms of assembly, homodimer. The tRNA molecule binds across the dimer.

It localises to the cytoplasm. It catalyses the reaction tRNA(Ser) + L-serine + ATP = L-seryl-tRNA(Ser) + AMP + diphosphate + H(+). The catalysed reaction is tRNA(Sec) + L-serine + ATP = L-seryl-tRNA(Sec) + AMP + diphosphate + H(+). It participates in aminoacyl-tRNA biosynthesis; selenocysteinyl-tRNA(Sec) biosynthesis; L-seryl-tRNA(Sec) from L-serine and tRNA(Sec): step 1/1. Functionally, catalyzes the attachment of serine to tRNA(Ser). Is also able to aminoacylate tRNA(Sec) with serine, to form the misacylated tRNA L-seryl-tRNA(Sec), which will be further converted into selenocysteinyl-tRNA(Sec). This chain is Serine--tRNA ligase, found in Mesoplasma florum (strain ATCC 33453 / NBRC 100688 / NCTC 11704 / L1) (Acholeplasma florum).